A 205-amino-acid polypeptide reads, in one-letter code: Small ribosomal subunit protein uS4 (205 aa).

In terms of domain architecture, S4 RNA-binding spans 95-163; that stretch reads RRLDNVVYRL…FKENLESRDP (69 aa).

This sequence belongs to the universal ribosomal protein uS4 family. In terms of assembly, part of the 30S ribosomal subunit. Contacts protein S5. The interaction surface between S4 and S5 is involved in control of translational fidelity.

One of the primary rRNA binding proteins, it binds directly to 16S rRNA where it nucleates assembly of the body of the 30S subunit. Its function is as follows. With S5 and S12 plays an important role in translational accuracy. This Persephonella marina (strain DSM 14350 / EX-H1) protein is Small ribosomal subunit protein uS4.